The following is a 123-amino-acid chain: Large ribosomal subunit protein bL12 (123 aa).

It belongs to the bacterial ribosomal protein bL12 family. As to quaternary structure, homodimer. Part of the ribosomal stalk of the 50S ribosomal subunit. Forms a multimeric L10(L12)X complex, where L10 forms an elongated spine to which 2 to 4 L12 dimers bind in a sequential fashion. Binds GTP-bound translation factors.

Its function is as follows. Forms part of the ribosomal stalk which helps the ribosome interact with GTP-bound translation factors. Is thus essential for accurate translation. The polypeptide is Large ribosomal subunit protein bL12 (Dechloromonas aromatica (strain RCB)).